The chain runs to 333 residues: Transcription initiation factor IIB (333 aa).

The segment at 33 to 64 adopts a TFIIB-type zinc-finger fold; that stretch reads EIYRCPICGNDRFVYNYERGEVVCIVCGAVVQ. Zn(2+)-binding residues include Cys-37, Cys-40, Cys-56, and Cys-59. 2 consecutive repeat copies span residues 149–232 and 243–324.

It belongs to the TFIIB family.

In terms of biological role, stabilizes TBP binding to an archaeal box-A promoter. Also responsible for recruiting RNA polymerase II to the pre-initiation complex (DNA-TBP-TFIIB). The polypeptide is Transcription initiation factor IIB (Pyrobaculum arsenaticum (strain DSM 13514 / JCM 11321 / PZ6)).